The following is a 311-amino-acid chain: Porphobilinogen deaminase (311 aa).

Residue Cys241 is modified to S-(dipyrrolylmethanemethyl)cysteine.

The protein belongs to the HMBS family. Monomer. The cofactor is dipyrromethane.

The catalysed reaction is 4 porphobilinogen + H2O = hydroxymethylbilane + 4 NH4(+). The protein operates within porphyrin-containing compound metabolism; protoporphyrin-IX biosynthesis; coproporphyrinogen-III from 5-aminolevulinate: step 2/4. Tetrapolymerization of the monopyrrole PBG into the hydroxymethylbilane pre-uroporphyrinogen in several discrete steps. The protein is Porphobilinogen deaminase of Shouchella clausii (strain KSM-K16) (Alkalihalobacillus clausii).